A 216-amino-acid polypeptide reads, in one-letter code: Adenylate kinase (216 aa).

10-15 contacts ATP; sequence GAGKGT. The tract at residues 30 to 59 is NMP; it reads STGDMFRAAIKEGTPLGLQAKEYMDRGDLV. AMP is bound by residues threonine 31, arginine 36, 57–59, 85–88, and glutamine 92; these read DLV and GFPR. An LID region spans residues 126–163; it reads GRRICKNCGATYHLVFNPPAKSGVCDKCGGELYQRADD. Residue arginine 127 coordinates ATP. Zn(2+)-binding residues include cysteine 130 and cysteine 133. 136-137 lines the ATP pocket; the sequence is TY. Residues cysteine 150 and cysteine 153 each coordinate Zn(2+). 2 residues coordinate AMP: arginine 160 and arginine 171. An ATP-binding site is contributed by glutamine 199.

It belongs to the adenylate kinase family. Monomer.

The protein resides in the cytoplasm. It catalyses the reaction AMP + ATP = 2 ADP. Its pathway is purine metabolism; AMP biosynthesis via salvage pathway; AMP from ADP: step 1/1. Its function is as follows. Catalyzes the reversible transfer of the terminal phosphate group between ATP and AMP. Plays an important role in cellular energy homeostasis and in adenine nucleotide metabolism. This chain is Adenylate kinase, found in Geobacillus sp. (strain WCH70).